We begin with the raw amino-acid sequence, 512 residues long: FAD-dependent monooxygenase prx3 (512 aa).

An N-terminal signal peptide occupies residues 1 to 19; the sequence is MLSLKAFLALSLSIHLSQG. Positions 63–235 constitute an FAD-binding PCMH-type domain; the sequence is CQTTPTCVFA…TRFDLATFSV (173 aa). The residue at position 100 (histidine 100) is a Pros-8alpha-FAD histidine. Residues asparagine 197, asparagine 281, asparagine 307, asparagine 329, asparagine 361, and asparagine 477 are each glycosylated (N-linked (GlcNAc...) asparagine).

The protein belongs to the oxygen-dependent FAD-linked oxidoreductase family.

It functions in the pathway sesquiterpene biosynthesis. Functionally, FAD-dependent monooxygenase; part of the gene cluster that mediates the biosynthesis of PR-toxin, a bicyclic sesquiterpene belonging to the eremophilane class and acting as a mycotoxin. The first step of the pathway is catalyzed by the aristolochene synthase which performs the cyclization of trans,trans-farnesyl diphosphate (FPP) to the bicyclic sesquiterpene aristolochene. Following the formation of aristolochene, the non-oxygenated aristolochene is converted to the trioxygenated intermediate eremofortin B, via 7-epi-neopetasone. This conversion appears to involve three enzymes, a hydroxysterol oxidase-like enzyme, the quinone-oxidase prx3 that forms the quinone-type-structure in the bicyclic nucleus of aristolochene with the C8-oxo group and the C-3 hydroxyl group, and the P450 monooxygenase ORF6 that introduces the epoxide at the double bond between carbons 1 and 2. No monoxy or dioxy-intermediates have been reported to be released to the broth, so these three early oxidative reactions may be coupled together. Eremofortin B is further oxidized by another P450 monooxygenase, that introduces a second epoxide between carbons 7 and 11 prior to acetylation to eremofortin A by the acetyltransferase ORF8. The second epoxidation may be performed by a second P450 monooxygenase. After the acetylation step, eremofortin A is converted to eremofortin C and then to PR-toxin. First the conversion of eremofortin A to eremofortin C proceeds by oxidation of the side chain of the molecule at C-12 and is catalyzed by the short-chain oxidoreductase prx1. The cytochrome P450 monooxygenase ORF6 is probably also involved in this step. The primary alcohol formed at C-12 is finally oxidized by the short-chain alcohol dehydrogenase prx4 that forms PR-toxin. This is FAD-dependent monooxygenase prx3 from Penicillium roqueforti (strain FM164).